Here is a 309-residue protein sequence, read N- to C-terminus: Porphobilinogen deaminase (309 aa).

C241 carries the post-translational modification S-(dipyrrolylmethanemethyl)cysteine.

Belongs to the HMBS family. Monomer. Requires dipyrromethane as cofactor.

The enzyme catalyses 4 porphobilinogen + H2O = hydroxymethylbilane + 4 NH4(+). It participates in porphyrin-containing compound metabolism; protoporphyrin-IX biosynthesis; coproporphyrinogen-III from 5-aminolevulinate: step 2/4. Its function is as follows. Tetrapolymerization of the monopyrrole PBG into the hydroxymethylbilane pre-uroporphyrinogen in several discrete steps. This Campylobacter concisus (strain 13826) protein is Porphobilinogen deaminase.